A 70-amino-acid chain; its full sequence is Large ribosomal subunit protein eL38 (70 aa).

It belongs to the eukaryotic ribosomal protein eL38 family.

In Lonomia obliqua (Moth), this protein is Large ribosomal subunit protein eL38 (RpL38).